The following is a 194-amino-acid chain: Ras-related protein Rab-22A (194 aa).

12–20 (GDTGVGKSS) serves as a coordination point for GTP. The Effector region motif lies at 34–42 (INPTIGASF). Residues 60-64 (DTAGQ), 118-121 (NKCD), and 148-150 (SAK) contribute to the GTP site. The disordered stretch occupies residues 170-194 (DANPPSGGKGFKLRRQPSEPQRSCC). 2 S-geranylgeranyl cysteine lipidation sites follow: cysteine 193 and cysteine 194.

This sequence belongs to the small GTPase superfamily. Rab family. Interacts directly with ZFYVE20. Interacts (in its GTP-bound form) with RINL and RABGEF1. Binds EEA1.

The protein resides in the endosome membrane. The protein localises to the cell membrane. It is found in the early endosome. It localises to the late endosome. Its subcellular location is the cell projection. The protein resides in the ruffle. The protein localises to the cytoplasmic vesicle. It is found in the phagosome. It localises to the phagosome membrane. In terms of biological role, plays a role in endocytosis and intracellular protein transport. Mediates trafficking of TF from early endosomes to recycling endosomes. Required for NGF-mediated endocytosis of NTRK1, and subsequent neurite outgrowth. Binds GTP and GDP and has low GTPase activity. Alternates between a GTP-bound active form and a GDP-bound inactive form. The sequence is that of Ras-related protein Rab-22A (RAB22A) from Canis lupus familiaris (Dog).